We begin with the raw amino-acid sequence, 545 residues long: CTP synthase (545 aa).

The tract at residues 1–266 (MTTNYIFVTG…DDYICKRFSL (266 aa)) is amidoligase domain. Residue Ser-14 coordinates CTP. Ser-14 is a binding site for UTP. ATP contacts are provided by residues 15–20 (SLGKGI) and Asp-72. Residues Asp-72 and Glu-140 each contribute to the Mg(2+) site. CTP contacts are provided by residues 147–149 (DIE), 187–192 (KTKPTQ), and Lys-223. UTP-binding positions include 187 to 192 (KTKPTQ) and Lys-223. 239–241 (KDV) is an ATP binding site. Residues 291 to 542 (TIGMVGKYIE…VKAASEHQKR (252 aa)) enclose the Glutamine amidotransferase type-1 domain. Gly-352 contributes to the L-glutamine binding site. The Nucleophile; for glutamine hydrolysis role is filled by Cys-379. Residues 380-383 (LGMQ), Glu-403, and Arg-470 contribute to the L-glutamine site. Active-site residues include His-515 and Glu-517.

Belongs to the CTP synthase family. Homotetramer.

It carries out the reaction UTP + L-glutamine + ATP + H2O = CTP + L-glutamate + ADP + phosphate + 2 H(+). The enzyme catalyses L-glutamine + H2O = L-glutamate + NH4(+). The catalysed reaction is UTP + NH4(+) + ATP = CTP + ADP + phosphate + 2 H(+). It functions in the pathway pyrimidine metabolism; CTP biosynthesis via de novo pathway; CTP from UDP: step 2/2. Its activity is regulated as follows. Allosterically activated by GTP, when glutamine is the substrate; GTP has no effect on the reaction when ammonia is the substrate. The allosteric effector GTP functions by stabilizing the protein conformation that binds the tetrahedral intermediate(s) formed during glutamine hydrolysis. Inhibited by the product CTP, via allosteric rather than competitive inhibition. Catalyzes the ATP-dependent amination of UTP to CTP with either L-glutamine or ammonia as the source of nitrogen. Regulates intracellular CTP levels through interactions with the four ribonucleotide triphosphates. In Salmonella arizonae (strain ATCC BAA-731 / CDC346-86 / RSK2980), this protein is CTP synthase.